Here is an 820-residue protein sequence, read N- to C-terminus: Cation/H(+) antiporter 17 (820 aa).

12 helical membrane passes run 30–50 (LPLLILQICIVLLLTRLLAFL), 58–75 (RVIAEIVGGILLGPSALG), 90–110 (LTVLDTLANLGLIFFLFLVGL), 124–144 (ALSIALAGITLPFVLGIGTSF), 159–179 (FLVFMGVALSITAFPVLARIL), 192–212 (IALSAAAVNDVAAWILLALAV), 222–242 (LTSLWVFLSGCGFVLFCIFVV), 276–296 (FVTDFIGIHALFGAFVIGVIF), 313–333 (LVSGLFLPLYFVSSGLKTNVA), 342–362 (GLLVLVIFNACFGKIIGTVLV), 374–394 (LALGFLMNTKGLVELIVLNIG), and 404–424 (IFAIMVLMAIFTTFMTTPLVL). 2 positions are modified to phosphoserine: Ser-817 and Ser-819.

Belongs to the monovalent cation:proton antiporter 2 (CPA2) transporter (TC 2.A.37) family. CHX (TC 2.A.37.4) subfamily. Predominantly expressed in epidermal and cortical cells of mature roots but also barely detected in leaves.

It is found in the membrane. Operates as a K(+)/H(+) antiporter that controls K(+) acquisition and homeostasis. The sequence is that of Cation/H(+) antiporter 17 (CHX17) from Arabidopsis thaliana (Mouse-ear cress).